Reading from the N-terminus, the 510-residue chain is NAD(P)H-quinone oxidoreductase subunit 2, chloroplastic (510 aa).

Helical transmembrane passes span 24-44 (LLLF…GLIL), 59-79 (WFYF…LFRW), 99-119 (IFQF…VEYI), 124-144 (MAIT…MFLC), 149-169 (LITI…LSGY), 183-203 (YLLM…WLYG), 229-249 (ISIA…PAPF), 295-315 (WHLL…LIAI), 323-343 (MLAY…IVGD), 354-374 (YMLF…SFGL), 395-415 (ALSL…AGFF), 418-438 (LYLF…MGLL), and 484-504 (MTVC…ILAI).

The protein belongs to the complex I subunit 2 family. In terms of assembly, NDH is composed of at least 16 different subunits, 5 of which are encoded in the nucleus.

It localises to the plastid. Its subcellular location is the chloroplast thylakoid membrane. It catalyses the reaction a plastoquinone + NADH + (n+1) H(+)(in) = a plastoquinol + NAD(+) + n H(+)(out). It carries out the reaction a plastoquinone + NADPH + (n+1) H(+)(in) = a plastoquinol + NADP(+) + n H(+)(out). Its function is as follows. NDH shuttles electrons from NAD(P)H:plastoquinone, via FMN and iron-sulfur (Fe-S) centers, to quinones in the photosynthetic chain and possibly in a chloroplast respiratory chain. The immediate electron acceptor for the enzyme in this species is believed to be plastoquinone. Couples the redox reaction to proton translocation, and thus conserves the redox energy in a proton gradient. In Sisyrinchium montanum (Strict blue-eyed grass), this protein is NAD(P)H-quinone oxidoreductase subunit 2, chloroplastic.